The chain runs to 240 residues: Uridylate kinase (240 aa).

12–15 (KLSG) is a binding site for ATP. The interval 20-25 (GEKGFG) is involved in allosteric activation by GTP. Position 54 (G54) interacts with UMP. Residues G55 and R59 each coordinate ATP. Residues D74 and 135-142 (TGSPYFST) contribute to the UMP site. 3 residues coordinate ATP: N163, Y169, and D172.

Belongs to the UMP kinase family. Homohexamer.

It is found in the cytoplasm. The enzyme catalyses UMP + ATP = UDP + ADP. It functions in the pathway pyrimidine metabolism; CTP biosynthesis via de novo pathway; UDP from UMP (UMPK route): step 1/1. With respect to regulation, allosterically activated by GTP. Inhibited by UTP. In terms of biological role, catalyzes the reversible phosphorylation of UMP to UDP. In Lactiplantibacillus plantarum (strain ATCC BAA-793 / NCIMB 8826 / WCFS1) (Lactobacillus plantarum), this protein is Uridylate kinase.